Reading from the N-terminus, the 399-residue chain is Leu/Ile/Val-binding protein homolog 7 (399 aa).

A signal peptide spans 1 to 22 (MEKHLIALSVAALLAGAAPASA).

Belongs to the leucine-binding protein family.

In terms of biological role, component of an amino-acid transport system. This is Leu/Ile/Val-binding protein homolog 7 from Brucella melitensis biotype 1 (strain ATCC 23456 / CCUG 17765 / NCTC 10094 / 16M).